The following is a 532-amino-acid chain: Cilia- and flagella-associated protein 97 (532 aa).

Ser-19 bears the Phosphoserine mark. Disordered regions lie at residues 28-83, 116-263, 306-333, 398-421, and 485-532; these read ETNS…PVEN, IPNR…TPDI, KAAK…SLDH, LSRQ…PPKL, and GQYS…TAWL. The segment covering 35–49 has biased composition (basic and acidic residues); that stretch reads KQNDDPKERIDKDTK. The segment covering 50–63 has biased composition (polar residues); it reads NVNSNTGMQTTENY. Residues 67–82 show a composition bias toward basic and acidic residues; sequence KGNERNVKFPPEHPVE. Residues 127-139 show a composition bias toward acidic residues; the sequence is GEDDYYTDGEESS. Residue Thr-133 is modified to Phosphothreonine. Residues Ser-138 and Ser-139 each carry the phosphoserine modification. 2 stretches are compositionally biased toward low complexity: residues 170-185 and 194-205; these read SSSS…SGSG and DSHLSDSSPSSK. At Ser-218 the chain carries Phosphoserine. Residues 227 to 239 are compositionally biased toward polar residues; the sequence is IKSTETQPSSTTP. At Ser-248 the chain carries Phosphoserine. The segment covering 253-263 has biased composition (polar residues); it reads TDVSPLSTPDI. A compositionally biased stretch (low complexity) spans 320-329; it reads SSKSSSVLDS. Residue Ser-330 is modified to Phosphoserine. A coiled-coil region spans residues 374 to 450; the sequence is GKNYSFTREE…ALLKRLEAVK (77 aa). The span at 493-503 shows a compositional bias: polar residues; the sequence is SRTSSATSGLS.

The protein belongs to the CFAP97 family.

The polypeptide is Cilia- and flagella-associated protein 97 (Homo sapiens (Human)).